The sequence spans 113 residues: MKKNERIRKNIEFRRVYRRGKSYSNSLLVLYVFKNNNNVDTSRVGISVSKKVGNSVVRSRVKRLISESYRLNCSNIKEKYDLVFVARNKSKDKTYKEIEGSVTNLLKRAGLYN.

Belongs to the RnpA family. In terms of assembly, consists of a catalytic RNA component (M1 or rnpB) and a protein subunit.

The enzyme catalyses Endonucleolytic cleavage of RNA, removing 5'-extranucleotides from tRNA precursor.. Its function is as follows. RNaseP catalyzes the removal of the 5'-leader sequence from pre-tRNA to produce the mature 5'-terminus. It can also cleave other RNA substrates such as 4.5S RNA. The protein component plays an auxiliary but essential role in vivo by binding to the 5'-leader sequence and broadening the substrate specificity of the ribozyme. The chain is Ribonuclease P protein component from Clostridium novyi (strain NT).